The primary structure comprises 589 residues: ATP-dependent lipid A-core flippase (589 aa).

Helical transmembrane passes span 23–43, 60–80, 153–173, 249–269, and 272–292; these read WPIF…DAGF, LVFI…RGAA, VGLL…FLVI, VGTS…LFFA, and PSFH…IMML. Residues 27-307 form the ABC transmembrane type-1 domain; that stretch reads LIGVVGMIAV…LTMVNSYIQK (281 aa). The region spanning 339–575 is the ABC transporter domain; the sequence is IEYQGVSFAY…NGAYAELYRM (237 aa). An ATP-binding site is contributed by 373-380; the sequence is GRSGAGKS.

This sequence belongs to the ABC transporter superfamily. Lipid exporter (TC 3.A.1.106) family. In terms of assembly, homodimer.

It localises to the cell inner membrane. The enzyme catalyses ATP + H2O + lipid A-core oligosaccharideSide 1 = ADP + phosphate + lipid A-core oligosaccharideSide 2.. Its function is as follows. Involved in lipopolysaccharide (LPS) biosynthesis. Translocates lipid A-core from the inner to the outer leaflet of the inner membrane. Transmembrane domains (TMD) form a pore in the inner membrane and the ATP-binding domain (NBD) is responsible for energy generation. In Coxiella burnetii (strain RSA 493 / Nine Mile phase I), this protein is ATP-dependent lipid A-core flippase.